The chain runs to 259 residues: Diphthine synthase (259 aa).

S-adenosyl-L-methionine is bound by residues Leu-9, Asp-85, Val-88, 113–114 (TA), Leu-168, Ala-209, and His-234.

Belongs to the diphthine synthase family. In terms of assembly, homodimer.

The catalysed reaction is 2-[(3S)-amino-3-carboxypropyl]-L-histidyl-[translation elongation factor 2] + 3 S-adenosyl-L-methionine = diphthine-[translation elongation factor 2] + 3 S-adenosyl-L-homocysteine + 3 H(+). It functions in the pathway protein modification; peptidyl-diphthamide biosynthesis. Its function is as follows. S-adenosyl-L-methionine-dependent methyltransferase that catalyzes the trimethylation of the amino group of the modified target histidine residue in translation elongation factor 2 (EF-2), to form an intermediate called diphthine. The three successive methylation reactions represent the second step of diphthamide biosynthesis. This Haloarcula marismortui (strain ATCC 43049 / DSM 3752 / JCM 8966 / VKM B-1809) (Halobacterium marismortui) protein is Diphthine synthase.